We begin with the raw amino-acid sequence, 210 residues long: Uracil phosphoribosyltransferase (210 aa).

5-phospho-alpha-D-ribose 1-diphosphate is bound by residues R78, R103, and 130–138 (DPMLATGGT). Residues I193 and 198-200 (GDA) each bind uracil. A 5-phospho-alpha-D-ribose 1-diphosphate-binding site is contributed by D199.

The protein belongs to the UPRTase family. The cofactor is Mg(2+).

It catalyses the reaction UMP + diphosphate = 5-phospho-alpha-D-ribose 1-diphosphate + uracil. Its pathway is pyrimidine metabolism; UMP biosynthesis via salvage pathway; UMP from uracil: step 1/1. Its activity is regulated as follows. Allosterically activated by GTP. Its function is as follows. Catalyzes the conversion of uracil and 5-phospho-alpha-D-ribose 1-diphosphate (PRPP) to UMP and diphosphate. This Xanthomonas campestris pv. campestris (strain 8004) protein is Uracil phosphoribosyltransferase.